Reading from the N-terminus, the 661-residue chain is MGFKLQMSWMPSLLSQKRRNGPPLGLRNLGNTCYLNSVLQCLTFTPPLANFCLTHKHSSHCDTYVDGERKRDCPFCIVEKRIARSLSVDLTTDAPNKISSCLKIFAEHFKLGRQEDAHEFLRYVIDACHNTSLRLKKLRYNGNEPFNGNSVVKEIFGGALQSQVKCLSCGAESNKADEIMDISLEILQSSSVKESLQKFFQSEILDGNNKYRCESCEKLVTARKQMSILQAPNILVIQLKRFGGIFGGKIDKAISFGEILVLSNFMSKASKDPQPEYKLFGIIVHSGFSPESGHYYAYVKDSLGRWYCCNDSFVSLSTLQEVLSEKAYILFFSRSNQRPASAKTLVTSNGTTSHEVNGCETSNPQKFIGPLNGFNMKPQAEQSFQKGNLASSKPHKFIRPKPRAEQAPLEDNLLSSKVEKAPLRPHAKVSISVNLGAKRVSPVNGRLSFHQDENIAPKANKENSVSVLPTKVNSGTERKFGTENGGNGVKENGSAPGSSNHKVALHPHERSNGSSNGGDHHKDNLHPCGSNGSQNGTAHPETERNGVSTTQSKGLCSSTKEDPCILLRKDESSRNELEAIKESLKKDALSHLRSCGWYDKVLISMHAKKRLRTEQSGGEDGSDLKRRLIEDVKSSLKSQIPEELKADLVNRIWEISKKKYS.

The USP domain maps to 24 to 335; sequence LGLRNLGNTC…KAYILFFSRS (312 aa). The active-site Nucleophile is the C33. H294 acts as the Proton acceptor in catalysis. Disordered regions lie at residues 387 to 406 and 449 to 558; these read GNLASSKPHKFIRPKPRAEQ and FHQD…LCSS. Basic and acidic residues predominate over residues 449–461; it reads FHQDENIAPKANK. 2 stretches are compositionally biased toward polar residues: residues 462 to 475 and 545 to 558; these read ENSVSVLPTKVNSG and NGVSTTQSKGLCSS.

Belongs to the peptidase C19 family.

It catalyses the reaction Thiol-dependent hydrolysis of ester, thioester, amide, peptide and isopeptide bonds formed by the C-terminal Gly of ubiquitin (a 76-residue protein attached to proteins as an intracellular targeting signal).. In terms of biological role, recognizes and hydrolyzes the peptide bond at the C-terminal Gly of ubiquitin. Involved in the processing of poly-ubiquitin precursors as well as that of ubiquitinated proteins. This Arabidopsis thaliana (Mouse-ear cress) protein is Ubiquitin carboxyl-terminal hydrolase 25 (UBP25).